The sequence spans 86 residues: Small ribosomal subunit protein uS17 (86 aa).

The protein belongs to the universal ribosomal protein uS17 family. As to quaternary structure, part of the 30S ribosomal subunit.

Functionally, one of the primary rRNA binding proteins, it binds specifically to the 5'-end of 16S ribosomal RNA. This Halalkalibacterium halodurans (strain ATCC BAA-125 / DSM 18197 / FERM 7344 / JCM 9153 / C-125) (Bacillus halodurans) protein is Small ribosomal subunit protein uS17.